The primary structure comprises 452 residues: Peptidase M20 domain-containing protein SMAC_03666.2 (452 aa).

The first 28 residues, 1–28 (MKATSNLLLLWGTSLLSPSSAFVIDNHH), serve as a signal peptide directing secretion. A glycan (N-linked (GlcNAc...) asparagine) is linked at Asn-140. Asp-186 is a Zn(2+) binding site. Glu-220 serves as the catalytic Proton acceptor. Glu-221 provides a ligand contact to Zn(2+). The N-linked (GlcNAc...) asparagine glycan is linked to Asn-315.

Belongs to the peptidase M20A family. Requires Zn(2+) as cofactor.

The protein localises to the secreted. This Sordaria macrospora (strain ATCC MYA-333 / DSM 997 / K(L3346) / K-hell) protein is Peptidase M20 domain-containing protein SMAC_03666.2.